A 424-amino-acid polypeptide reads, in one-letter code: Protein UL117 (424 aa).

Positions 57–82 are disordered; the sequence is IVPTTSSSLAPPRDDERRPTPPLRPP.

Belongs to the herpesviridae U84 family.

The protein resides in the host nucleus. In terms of biological role, plays a role in the inhibition of host DNA replication in the infected cell. Targets the mini-chromosome maintenance (MCM) complex and blocks the accumulation of MCM proteins and their loading onto host chromatin. The protein is Protein UL117 (UL117) of Human cytomegalovirus (strain AD169) (HHV-5).